The primary structure comprises 329 residues: 4-hydroxythreonine-4-phosphate dehydrogenase (329 aa).

Residues His-136 and Thr-137 each contribute to the substrate site. His-166, His-211, and His-266 together coordinate a divalent metal cation. Residues Lys-274, Asn-283, and Arg-292 each coordinate substrate.

It belongs to the PdxA family. Homodimer. It depends on Zn(2+) as a cofactor. Mg(2+) serves as cofactor. Co(2+) is required as a cofactor.

It is found in the cytoplasm. It catalyses the reaction 4-(phosphooxy)-L-threonine + NAD(+) = 3-amino-2-oxopropyl phosphate + CO2 + NADH. Its pathway is cofactor biosynthesis; pyridoxine 5'-phosphate biosynthesis; pyridoxine 5'-phosphate from D-erythrose 4-phosphate: step 4/5. Its function is as follows. Catalyzes the NAD(P)-dependent oxidation of 4-(phosphooxy)-L-threonine (HTP) into 2-amino-3-oxo-4-(phosphooxy)butyric acid which spontaneously decarboxylates to form 3-amino-2-oxopropyl phosphate (AHAP). The protein is 4-hydroxythreonine-4-phosphate dehydrogenase of Escherichia coli O17:K52:H18 (strain UMN026 / ExPEC).